The sequence spans 473 residues: Photosystem II CP43 reaction center protein (473 aa).

A propeptide spanning residues 1-14 is cleaved from the precursor; the sequence is MKTLYSLRRFYPVE. N-acetylthreonine is present on Thr-15. Phosphothreonine is present on Thr-15. 5 consecutive transmembrane segments (helical) span residues 69–93, 134–155, 178–200, 255–275, and 291–312; these read LFEV…PHLA, LIGP…KDRS, KALY…RKIT, KPFA…LSYS, and WFNN…ASQA. Residue Glu-367 coordinates [CaMn4O5] cluster. A helical membrane pass occupies residues 447-471; it reads RARAAAAGFEKGIDRDFEPVLSMNP.

Belongs to the PsbB/PsbC family. PsbC subfamily. In terms of assembly, PSII is composed of 1 copy each of membrane proteins PsbA, PsbB, PsbC, PsbD, PsbE, PsbF, PsbH, PsbI, PsbJ, PsbK, PsbL, PsbM, PsbT, PsbX, PsbY, PsbZ, Psb30/Ycf12, at least 3 peripheral proteins of the oxygen-evolving complex and a large number of cofactors. It forms dimeric complexes. Binds multiple chlorophylls and provides some of the ligands for the Ca-4Mn-5O cluster of the oxygen-evolving complex. It may also provide a ligand for a Cl- that is required for oxygen evolution. PSII binds additional chlorophylls, carotenoids and specific lipids. serves as cofactor.

The protein resides in the plastid. Its subcellular location is the chloroplast thylakoid membrane. One of the components of the core complex of photosystem II (PSII). It binds chlorophyll and helps catalyze the primary light-induced photochemical processes of PSII. PSII is a light-driven water:plastoquinone oxidoreductase, using light energy to abstract electrons from H(2)O, generating O(2) and a proton gradient subsequently used for ATP formation. The sequence is that of Photosystem II CP43 reaction center protein from Cycas taitungensis (Prince sago).